Consider the following 424-residue polypeptide: Probable methyltransferase EP424R (424 aa).

The 213-residue stretch at 104–316 folds into the Adrift-type SAM-dependent 2'-O-MTase domain; the sequence is QIVTNAWLKM…TYIVGKNRLR (213 aa). S-adenosyl-L-methionine-binding residues include Gly136 and Asp229. Lys269 (proton acceptor) is an active-site residue.

The protein localises to the virion. In African swine fever virus (strain Badajoz 1971 Vero-adapted) (Ba71V), this protein is Probable methyltransferase EP424R.